We begin with the raw amino-acid sequence, 215 residues long: Probable nicotinate-nucleotide adenylyltransferase (215 aa).

Belongs to the NadD family.

It catalyses the reaction nicotinate beta-D-ribonucleotide + ATP + H(+) = deamido-NAD(+) + diphosphate. Its pathway is cofactor biosynthesis; NAD(+) biosynthesis; deamido-NAD(+) from nicotinate D-ribonucleotide: step 1/1. Its function is as follows. Catalyzes the reversible adenylation of nicotinate mononucleotide (NaMN) to nicotinic acid adenine dinucleotide (NaAD). The sequence is that of Probable nicotinate-nucleotide adenylyltransferase from Gluconacetobacter diazotrophicus (strain ATCC 49037 / DSM 5601 / CCUG 37298 / CIP 103539 / LMG 7603 / PAl5).